The sequence spans 1763 residues: Collagen alpha-2(IV) chain (1763 aa).

The N-terminal stretch at 1–26 is a signal peptide; that stretch reads MSSRLRIPLWLLLPTTALVYFVTTVS. The segment at 27-42 is 7S domain; it reads TQITCRDCTNRGCFCV. The interval 43–1529 is triple-helical region; that stretch reads GEKGSMGIPG…SGPPGPPGPS (1487 aa). 2 disordered regions span residues 51 to 529 and 550 to 1529; these read PGPQ…PGPK and AGYA…PGPS. The segment covering 72–81 has biased composition (low complexity); sequence PGPKGQKGSQ. N126 carries an N-linked (GlcNAc...) asparagine glycan. A compositionally biased stretch (pro residues) spans 135–152; it reads PGLPGPPGMPGFPGPPGV. Residues 190–199 show a composition bias toward basic and acidic residues; that stretch reads FPGEKGDRGD. The segment covering 206 to 217 has biased composition (pro residues); the sequence is RGPPGEAGPPGN. Positions 225–235 are enriched in low complexity; sequence PKGDPGEQGPR. The O-linked (Xyl...) (glycosaminoglycan) serine glycan is linked to A249. A compositionally biased stretch (low complexity) spans 326–335; the sequence is DGLPGVPGLP. The span at 400–409 shows a compositional bias: gly residues; sequence GLPGGPGLPG. 2 stretches are compositionally biased toward low complexity: residues 410-419 and 428-453; these read LPGLEGLPGP and IPGAPGVQGPPGLAGPPGAKGEPGPR. Over residues 466–481 the composition is skewed to basic and acidic residues; that stretch reads KDGRPGLDGLPGRKGE. Residues 564 to 582 are compositionally biased toward low complexity; it reads LPGIPGATGAPGDDGLPGA. Residues 583–592 are compositionally biased toward pro residues; that stretch reads PGRPGPPGPP. Low complexity-rich tracts occupy residues 699 to 714 and 731 to 783; these read DAGLPGLPGLPGAVGP and KDGL…PGIP. A compositionally biased stretch (pro residues) spans 810–832; sequence PGLPGPKGEPGPSTTGPPGPPGF. 10 stretches are compositionally biased toward low complexity: residues 865–895, 946–977, 1040–1051, 1077–1086, 1108–1146, 1210–1231, 1280–1296, 1367–1386, 1462–1480, and 1499–1510; these read EIGLPGLAGAPGFPGAKGEPGLPGLPGKEGP, FPGQKGQPGFPGVAGAKGEAGLPGLPGAPGQK, PGLPGQPGLRGP, LMGEKGLPGL, PGLKGEAGLPGAPGLPGQDGLPGLPGQKGESGFPGQPGL, PGFPGLKGEPGLPGLEGQPGPR, LPGLPGKDGLPGLPGLK, PAGLPGLPGLKGEPGLPGFP, LPGLDGLPGPSGPPGFAGA, and PGLPGFPGIEGI. Pro residues predominate over residues 1511 to 1528; sequence PGPPGLPGPSGPPGPPGP. Residues 1533 to 1756 enclose the Collagen IV NC1 domain; the sequence is GFLLVKHSQT…SRCQVCIRSP (224 aa). Disulfide bonds link C1548–C1637, C1581–C1634, C1593–C1599, C1656–C1752, C1690–C1749, and C1702–C1709.

This sequence belongs to the type IV collagen family. In terms of assembly, trimers of two alpha 1(IV) and one alpha 2(IV) chain. Type IV collagen forms a mesh-like network linked through intermolecular interactions between 7S domains and between NC1 domains. In terms of processing, prolines at the third position of the tripeptide repeating unit (G-X-Y) are hydroxylated in some or all of the chains. Post-translationally, type IV collagens contain numerous cysteine residues which are involved in inter- and intramolecular disulfide bonding. 12 of these, located in the NC1 domain, are conserved in all known type IV collagens. The trimeric structure of the NC1 domains is stabilized by covalent bonds between Lys and Met residues.

It is found in the secreted. It localises to the extracellular space. The protein resides in the extracellular matrix. Its subcellular location is the basement membrane. Functionally, collagen type IV is specific for basement membranes. In Ascaris suum (Pig roundworm), this protein is Collagen alpha-2(IV) chain.